The sequence spans 1288 residues: Contactin-associated protein-like 3 (1288 aa).

The first 25 residues, 1–25 (MASVAWAVLKVLLLLPTQTWSPVGA), serve as a signal peptide directing secretion. The Extracellular portion of the chain corresponds to 26 to 1245 (GNPPDCDAPL…LVNADRRDSA (1220 aa)). The F5/8 type C domain occupies 31 to 177 (CDAPLASALP…IGMRIEVYGC (147 aa)). Cysteines 31 and 177 form a disulfide. Laminin G-like domains are found at residues 183–364 (VVYF…SFSC) and 370–545 (VPVT…IDSC). Residues Asn285, Asn359, Asn441, and Asn497 are each glycosylated (N-linked (GlcNAc...) asparagine). Cys332 and Cys364 are disulfide-bonded. Cystine bridges form between Cys513–Cys545, Cys551–Cys562, Cys556–Cys571, and Cys573–Cys583. An EGF-like 1 domain is found at 551–583 (CLPSYCEHGGECSQSWDTFSCDCLGTGYTGETC). A Fibrinogen C-terminal domain is found at 584–792 (HSSLYEQSCE…LLCRGDQSFW (209 aa)). N-linked (GlcNAc...) asparagine glycans are attached at residues Asn623 and Asn706. The Laminin G-like 3 domain maps to 793-958 (NSASFNTETS…TVTPGVEPGC (166 aa)). Intrachain disulfides connect Cys931–Cys958, Cys962–Cys975, Cys969–Cys984, and Cys986–Cys996. In terms of domain architecture, EGF-like 2 spans 962–996 (CSTYGHLCRNGGRCREKRRGVTCDCAFSAYDGPFC). In terms of domain architecture, Laminin G-like 4 spans 1015–1203 (QEHYTLSENS…RGHVAPMARC (189 aa)). N-linked (GlcNAc...) asparagine glycans are attached at residues Asn1023, Asn1073, and Asn1120. Cysteines 1167 and 1203 form a disulfide. Residues 1215-1236 (ELAPRLAGGAGRSGPADEGEPL) form a disordered region. A helical membrane pass occupies residues 1246–1266 (VIGGVIAVVIFILLCITAIAI). The Cytoplasmic portion of the chain corresponds to 1267 to 1288 (RIYQQRKLRKENESKVSKKEEC).

Belongs to the neurexin family.

Its subcellular location is the cell membrane. It is found in the secreted. The protein is Contactin-associated protein-like 3 (CNTNAP3) of Homo sapiens (Human).